Here is a 378-residue protein sequence, read N- to C-terminus: Alanine racemase (378 aa).

Lys40 functions as the Proton acceptor; specific for D-alanine in the catalytic mechanism. Position 40 is an N6-(pyridoxal phosphate)lysine (Lys40). Arg140 contacts substrate. The Proton acceptor; specific for L-alanine role is filled by Tyr270. Met317 is a binding site for substrate.

The protein belongs to the alanine racemase family. Requires pyridoxal 5'-phosphate as cofactor.

It catalyses the reaction L-alanine = D-alanine. It participates in amino-acid biosynthesis; D-alanine biosynthesis; D-alanine from L-alanine: step 1/1. In terms of biological role, catalyzes the interconversion of L-alanine and D-alanine. May also act on other amino acids. This chain is Alanine racemase (alr), found in Lacticaseibacillus casei (strain BL23) (Lactobacillus casei).